A 335-amino-acid chain; its full sequence is MTIAPEGRKLLRVEARNAEVPIEKKPSWLKNTAKMGPQFTELKSMARGRGLHTVCEEAGCPNIYECWEDREATFLIGGDTCTRRCDFCDIATGKPGMVDVAEPRKVAESVRDLGLRYATVTSVARDDLADGGAWLNAETIRAIHAMNPSTGVEILIPDFKGQPDAVQQVIDAQPEVFAHNLETVPRIFKQIRPAFAYERSLDVLTQGKEHGMIVKSNLILGMGETDDEVYEALCDLHDAGCDIITLTQYLRPGPTFHPIDRWVKPETFVELSKAAEEIGFLGVMAGPMVRSSYRAGKLWARAMKKMGREIPEHLSHIDDSGSATQEASSLLARLG.

7 residues coordinate [4Fe-4S] cluster: Cys55, Cys60, Cys66, Cys81, Cys85, Cys88, and Ser292. The 215-residue stretch at 67-281 (WEDREATFLI…SKAAEEIGFL (215 aa)) folds into the Radical SAM core domain.

This sequence belongs to the radical SAM superfamily. Lipoyl synthase family. The cofactor is [4Fe-4S] cluster.

The protein localises to the cytoplasm. The enzyme catalyses [[Fe-S] cluster scaffold protein carrying a second [4Fe-4S](2+) cluster] + N(6)-octanoyl-L-lysyl-[protein] + 2 oxidized [2Fe-2S]-[ferredoxin] + 2 S-adenosyl-L-methionine + 4 H(+) = [[Fe-S] cluster scaffold protein] + N(6)-[(R)-dihydrolipoyl]-L-lysyl-[protein] + 4 Fe(3+) + 2 hydrogen sulfide + 2 5'-deoxyadenosine + 2 L-methionine + 2 reduced [2Fe-2S]-[ferredoxin]. Its pathway is protein modification; protein lipoylation via endogenous pathway; protein N(6)-(lipoyl)lysine from octanoyl-[acyl-carrier-protein]: step 2/2. Its function is as follows. Catalyzes the radical-mediated insertion of two sulfur atoms into the C-6 and C-8 positions of the octanoyl moiety bound to the lipoyl domains of lipoate-dependent enzymes, thereby converting the octanoylated domains into lipoylated derivatives. The sequence is that of Lipoyl synthase from Kocuria rhizophila (strain ATCC 9341 / DSM 348 / NBRC 103217 / DC2201).